A 319-amino-acid polypeptide reads, in one-letter code: ATP-dependent 6-phosphofructokinase (319 aa).

ATP is bound at residue glycine 11. 21–25 (RAVVR) provides a ligand contact to ADP. ATP is bound by residues 72–73 (RC) and 102–105 (GDGS). Aspartate 103 lines the Mg(2+) pocket. 125–127 (TID) is a substrate binding site. Residue aspartate 127 is the Proton acceptor of the active site. Residue arginine 154 coordinates ADP. Substrate contacts are provided by residues arginine 162 and 169–171 (MGR). ADP contacts are provided by residues 185-187 (GAE), arginine 211, and 213-215 (KLH). Substrate is bound by residues glutamate 222, arginine 243, and 249 to 252 (HIQR).

The protein belongs to the phosphofructokinase type A (PFKA) family. ATP-dependent PFK group I subfamily. Prokaryotic clade 'B1' sub-subfamily. In terms of assembly, homotetramer. Mg(2+) serves as cofactor.

It is found in the cytoplasm. The enzyme catalyses beta-D-fructose 6-phosphate + ATP = beta-D-fructose 1,6-bisphosphate + ADP + H(+). Its pathway is carbohydrate degradation; glycolysis; D-glyceraldehyde 3-phosphate and glycerone phosphate from D-glucose: step 3/4. Allosterically activated by ADP and other diphosphonucleosides, and allosterically inhibited by phosphoenolpyruvate. Its function is as follows. Catalyzes the phosphorylation of D-fructose 6-phosphate to fructose 1,6-bisphosphate by ATP, the first committing step of glycolysis. This chain is ATP-dependent 6-phosphofructokinase, found in Alkaliphilus metalliredigens (strain QYMF).